We begin with the raw amino-acid sequence, 121 residues long: Small ribosomal subunit protein uS13 (121 aa).

The interval 92-121 (RKGLPVRGQSSKTNARTVKGPRKTVANKKK) is disordered. Residues 110-121 (KGPRKTVANKKK) are compositionally biased toward basic residues.

This sequence belongs to the universal ribosomal protein uS13 family. Part of the 30S ribosomal subunit. Forms a loose heterodimer with protein S19. Forms two bridges to the 50S subunit in the 70S ribosome.

Its function is as follows. Located at the top of the head of the 30S subunit, it contacts several helices of the 16S rRNA. In the 70S ribosome it contacts the 23S rRNA (bridge B1a) and protein L5 of the 50S subunit (bridge B1b), connecting the 2 subunits; these bridges are implicated in subunit movement. Contacts the tRNAs in the A and P-sites. In Mycoplasma capricolum subsp. capricolum (strain California kid / ATCC 27343 / NCTC 10154), this protein is Small ribosomal subunit protein uS13.